We begin with the raw amino-acid sequence, 84 residues long: Control protein C.SmaI (84 aa).

The HTH cro/C1-type domain occupies 19-73 (VRSYRNINNLSQEQLAEISGLHRTYIGSVERKERNVTLSTLIILAKALNTSVPKL). Residues 30-49 (QEQLAEISGLHRTYIGSVER) constitute a DNA-binding region (H-T-H motif).

In terms of biological role, may control expression of its associated restriction-modification system SmaI. The sequence is that of Control protein C.SmaI from Serratia marcescens.